The following is a 305-amino-acid chain: MIDLTLLGCGGNVPMPNRFLSSVFINYKGRKILIDCGEGTQVSMKLKKCGFKDIDLICITHLHGDHIFGLLGLLSTIGNSGRTSDLTIVGPVGIVDCIRSMRNLVEYVPYTLKIIENPQGNFSLDNKVLRNLEISTISLEHSIECLGYSFNFRRNPKFDIDKATKNEVPKILWNKLQEGQNIVLDSKQYTPDMVLGELRKGVKISLTTDTRPIESIPDFIKDSDLFICEAMYGDDLDISKAVRNKHMTFREAANLAKLGNVKQLLLTHFSPSLDIPSMYLENATNVFENTILGEDRLSLRLNFDE.

Zn(2+) is bound by residues histidine 61, histidine 63, aspartate 65, histidine 66, histidine 141, aspartate 209, and histidine 268. The active-site Proton acceptor is the aspartate 65.

The protein belongs to the RNase Z family. Homodimer. Requires Zn(2+) as cofactor.

The enzyme catalyses Endonucleolytic cleavage of RNA, removing extra 3' nucleotides from tRNA precursor, generating 3' termini of tRNAs. A 3'-hydroxy group is left at the tRNA terminus and a 5'-phosphoryl group is left at the trailer molecule.. Its function is as follows. Zinc phosphodiesterase, which displays some tRNA 3'-processing endonuclease activity. Probably involved in tRNA maturation, by removing a 3'-trailer from precursor tRNA. This chain is Ribonuclease Z, found in Clostridioides difficile (strain 630) (Peptoclostridium difficile).